We begin with the raw amino-acid sequence, 451 residues long: Penicillin-binding protein 4* (451 aa).

The active-site Acyl-ester intermediate is the Ser-61.

It belongs to the beta-lactamase family.

The protein localises to the forespore outer membrane. Its pathway is cell wall biogenesis; peptidoglycan biosynthesis. In terms of biological role, probably involved in peptidoglycan modification during cortex synthesis. This Bacillus subtilis (strain 168) protein is Penicillin-binding protein 4* (pbpE).